We begin with the raw amino-acid sequence, 222 residues long: Bone marrow proteoglycan (222 aa).

The first 16 residues, 1–16 (MKLPLLLALLFGAVSA), serve as a signal peptide directing secretion. The propeptide at 17–105 (LHLRSETSTF…VKVVGIPGCQ (89 aa)) is acidic. Thr23 carries O-linked (GalNAc...) threonine; partial glycosylation. O-linked (GalNAc...) serine glycosylation is present at Ser24. Thr25 is a glycosylation site (O-linked (GalNAc...) threonine). Residues 25-75 (TFETPLGAKTLPEDEETPEQEMEETPCRELEEEEEWGSGSEDASKKDGAVE) form a disordered region. Thr34 is a glycosylation site (O-linked (GalNAc...) threonine; partial). Positions 37-60 (EDEETPEQEMEETPCRELEEEEEW) are enriched in acidic residues. Residue Ser62 is glycosylated (O-linked (Xyl...) (chondroitin sulfate) serine). Residue Asn86 is glycosylated (N-linked (GlcNAc...) asparagine). Residues 104 to 222 (CQTCRYLLVR…LRRLPFICSY (119 aa)) enclose the C-type lectin domain. Intrachain disulfides connect Cys125-Cys220 and Cys197-Cys212.

As to quaternary structure, in pregnancy serum, the proform exists as a disulfide-linked 2:2 heterotetramer with PAPPA, as a disulfide-linked 2:2 heterotetramer with AGT, and as a complex (probably a 2:2:2 heterohexamer) with AGT and C3dg. Nitrated. In terms of tissue distribution, detected in plasma and urine (at protein level). Detected in placenta (at protein level). High levels of the proform in placenta and pregnancy serum; in placenta, localized to X cells of septa and anchoring villi. Lower levels in a variety of other tissues including kidney, myometrium, endometrium, ovaries, breast, prostate, bone marrow and colon.

Its subcellular location is the secreted. It localises to the cytoplasmic vesicle. The protein localises to the secretory vesicle. Its function is as follows. Cytotoxin and helminthotoxin. Also induces non-cytolytic histamine release from human basophils. Involved in antiparasitic defense mechanisms and immune hypersensitivity reactions. The proform acts as a proteinase inhibitor, reducing the activity of PAPPA. This is Bone marrow proteoglycan (PRG2) from Homo sapiens (Human).